Reading from the N-terminus, the 436-residue chain is GTPase Der (436 aa).

EngA-type G domains lie at Pro-4 to Ala-167 and Ile-175 to Glu-351. GTP is bound by residues Gly-10–Ser-17, Asp-57–Ile-61, Asn-119–Asp-122, Gly-181–Ser-188, Asp-229–Ile-233, and Asn-294–Asp-297. One can recognise a KH-like domain in the interval Gln-352–Lys-436.

This sequence belongs to the TRAFAC class TrmE-Era-EngA-EngB-Septin-like GTPase superfamily. EngA (Der) GTPase family. In terms of assembly, associates with the 50S ribosomal subunit.

In terms of biological role, GTPase that plays an essential role in the late steps of ribosome biogenesis. The protein is GTPase Der of Ligilactobacillus salivarius (strain UCC118) (Lactobacillus salivarius).